The sequence spans 182 residues: MRVLGIDPGLRRTGFGVIDAEGMRLRYVASGTIVVPPALALPERLKVILDNLRQVARDTRPDVAALEIVFLNTNPASTLLLGQARGAALCALADSQLAVHEYTALQIKKAVVGTGRAAKEQVQMMVQRLLSLDGTPAPDSADALACAICHAHVGPLQARLGGLSAATGLGGGTRVRGGRLVG.

Catalysis depends on residues D7, E67, and D139. The Mg(2+) site is built by D7, E67, and D139.

Belongs to the RuvC family. In terms of assembly, homodimer which binds Holliday junction (HJ) DNA. The HJ becomes 2-fold symmetrical on binding to RuvC with unstacked arms; it has a different conformation from HJ DNA in complex with RuvA. In the full resolvosome a probable DNA-RuvA(4)-RuvB(12)-RuvC(2) complex forms which resolves the HJ. It depends on Mg(2+) as a cofactor.

Its subcellular location is the cytoplasm. The catalysed reaction is Endonucleolytic cleavage at a junction such as a reciprocal single-stranded crossover between two homologous DNA duplexes (Holliday junction).. The RuvA-RuvB-RuvC complex processes Holliday junction (HJ) DNA during genetic recombination and DNA repair. Endonuclease that resolves HJ intermediates. Cleaves cruciform DNA by making single-stranded nicks across the HJ at symmetrical positions within the homologous arms, yielding a 5'-phosphate and a 3'-hydroxyl group; requires a central core of homology in the junction. The consensus cleavage sequence is 5'-(A/T)TT(C/G)-3'. Cleavage occurs on the 3'-side of the TT dinucleotide at the point of strand exchange. HJ branch migration catalyzed by RuvA-RuvB allows RuvC to scan DNA until it finds its consensus sequence, where it cleaves and resolves the cruciform DNA. This is Crossover junction endodeoxyribonuclease RuvC from Bordetella petrii (strain ATCC BAA-461 / DSM 12804 / CCUG 43448).